The following is a 102-amino-acid chain: Co-chaperonin GroES (102 aa).

It belongs to the GroES chaperonin family. As to quaternary structure, heptamer of 7 subunits arranged in a ring. Interacts with the chaperonin GroEL.

It localises to the cytoplasm. Together with the chaperonin GroEL, plays an essential role in assisting protein folding. The GroEL-GroES system forms a nano-cage that allows encapsulation of the non-native substrate proteins and provides a physical environment optimized to promote and accelerate protein folding. GroES binds to the apical surface of the GroEL ring, thereby capping the opening of the GroEL channel. The sequence is that of Co-chaperonin GroES from Streptomyces coelicolor (strain ATCC BAA-471 / A3(2) / M145).